We begin with the raw amino-acid sequence, 84 residues long: Large ribosomal subunit protein bL31B (84 aa).

It belongs to the bacterial ribosomal protein bL31 family. Type B subfamily. Part of the 50S ribosomal subunit.

This chain is Large ribosomal subunit protein bL31B, found in Staphylococcus aureus (strain Mu3 / ATCC 700698).